The primary structure comprises 310 residues: Homoserine O-acetyltransferase (310 aa).

Cysteine 142 serves as the catalytic Acyl-thioester intermediate. Substrate is bound by residues lysine 163 and serine 192. Histidine 235 (proton acceptor) is an active-site residue. Glutamate 237 is a catalytic residue. Arginine 249 serves as a coordination point for substrate.

The protein belongs to the MetA family.

The protein localises to the cytoplasm. It carries out the reaction L-homoserine + acetyl-CoA = O-acetyl-L-homoserine + CoA. The protein operates within amino-acid biosynthesis; L-methionine biosynthesis via de novo pathway; O-acetyl-L-homoserine from L-homoserine: step 1/1. Its function is as follows. Transfers an acetyl group from acetyl-CoA to L-homoserine, forming acetyl-L-homoserine. The chain is Homoserine O-acetyltransferase from Agathobacter rectalis (strain ATCC 33656 / DSM 3377 / JCM 17463 / KCTC 5835 / VPI 0990) (Eubacterium rectale).